Here is a 343-residue protein sequence, read N- to C-terminus: Glyceraldehyde-3-phosphate dehydrogenase 1 (343 aa).

NAD(+)-binding positions include 13–14 (RI), Asp35, Arg79, and Ser121. D-glyceraldehyde 3-phosphate is bound by residues 154–156 (SCT), Thr185, 214–215 (TG), and Arg237. The active-site Nucleophile is Cys155. Asn319 is a binding site for NAD(+).

It belongs to the glyceraldehyde-3-phosphate dehydrogenase family. As to quaternary structure, homotetramer.

The protein resides in the cytoplasm. The catalysed reaction is D-glyceraldehyde 3-phosphate + phosphate + NAD(+) = (2R)-3-phospho-glyceroyl phosphate + NADH + H(+). The protein operates within carbohydrate degradation; glycolysis; pyruvate from D-glyceraldehyde 3-phosphate: step 1/5. Its function is as follows. Catalyzes the oxidative phosphorylation of glyceraldehyde 3-phosphate (G3P) to 1,3-bisphosphoglycerate (BPG) using the cofactor NAD. The first reaction step involves the formation of a hemiacetal intermediate between G3P and a cysteine residue, and this hemiacetal intermediate is then oxidized to a thioester, with concomitant reduction of NAD to NADH. The reduced NADH is then exchanged with the second NAD, and the thioester is attacked by a nucleophilic inorganic phosphate to produce BPG. The protein is Glyceraldehyde-3-phosphate dehydrogenase 1 (gap1) of Trichormus variabilis (strain ATCC 29413 / PCC 7937) (Anabaena variabilis).